A 247-amino-acid chain; its full sequence is Uracil-DNA glycosylase (247 aa).

The active-site Proton acceptor is the Asp83.

This sequence belongs to the uracil-DNA glycosylase (UDG) superfamily. UNG family.

It is found in the cytoplasm. The enzyme catalyses Hydrolyzes single-stranded DNA or mismatched double-stranded DNA and polynucleotides, releasing free uracil.. Its function is as follows. Excises uracil residues from the DNA which can arise as a result of misincorporation of dUMP residues by DNA polymerase or due to deamination of cytosine. This chain is Uracil-DNA glycosylase, found in Deinococcus radiodurans (strain ATCC 13939 / DSM 20539 / JCM 16871 / CCUG 27074 / LMG 4051 / NBRC 15346 / NCIMB 9279 / VKM B-1422 / R1).